The chain runs to 741 residues: Catalase-peroxidase 2 (741 aa).

The signal sequence occupies residues 1–28 (MQKKRVGKSVVAALAIIAMSAGTVAAWA). Positions 107–228 (WHGAGTYRTY…LAATQMGLIY (122 aa)) form a cross-link, tryptophyl-tyrosyl-methioninium (Trp-Tyr) (with M-254). The active-site Proton acceptor is His-108. Residues 228–254 (YVNPEGPNGNPDPVAAAKDIRDAFGRM) constitute a cross-link (tryptophyl-tyrosyl-methioninium (Tyr-Met) (with W-107)). A heme b-binding site is contributed by His-269.

It belongs to the peroxidase family. Peroxidase/catalase subfamily. In terms of assembly, homodimer or homotetramer. Requires heme b as cofactor. Post-translationally, formation of the three residue Trp-Tyr-Met cross-link is important for the catalase, but not the peroxidase activity of the enzyme.

It catalyses the reaction H2O2 + AH2 = A + 2 H2O. The catalysed reaction is 2 H2O2 = O2 + 2 H2O. Bifunctional enzyme with both catalase and broad-spectrum peroxidase activity. This is Catalase-peroxidase 2 from Burkholderia ambifaria (strain ATCC BAA-244 / DSM 16087 / CCUG 44356 / LMG 19182 / AMMD) (Burkholderia cepacia (strain AMMD)).